We begin with the raw amino-acid sequence, 199 residues long: ATP synthase subunit b (199 aa).

Residues 5–25 (SFVTTLSVCVMILGLAALGFA) form a helical membrane-spanning segment.

This sequence belongs to the ATPase B chain family. In terms of assembly, F-type ATPases have 2 components, F(1) - the catalytic core - and F(0) - the membrane proton channel. F(1) has five subunits: alpha(3), beta(3), gamma(1), delta(1), epsilon(1). F(0) has three main subunits: a(1), b(2) and c(10-14). The alpha and beta chains form an alternating ring which encloses part of the gamma chain. F(1) is attached to F(0) by a central stalk formed by the gamma and epsilon chains, while a peripheral stalk is formed by the delta and b chains.

The protein localises to the cell inner membrane. Its function is as follows. F(1)F(0) ATP synthase produces ATP from ADP in the presence of a proton or sodium gradient. F-type ATPases consist of two structural domains, F(1) containing the extramembraneous catalytic core and F(0) containing the membrane proton channel, linked together by a central stalk and a peripheral stalk. During catalysis, ATP synthesis in the catalytic domain of F(1) is coupled via a rotary mechanism of the central stalk subunits to proton translocation. Component of the F(0) channel, it forms part of the peripheral stalk, linking F(1) to F(0). The protein is ATP synthase subunit b of Citrifermentans bemidjiense (strain ATCC BAA-1014 / DSM 16622 / JCM 12645 / Bem) (Geobacter bemidjiensis).